The chain runs to 142 residues: Hemoglobin subunit alpha (142 aa).

The region spanning 2–142 is the Globin domain; that stretch reads VLSAADKSNV…VGTVLTSKYR (141 aa). Serine 4 carries the post-translational modification Phosphoserine. N6-succinyllysine occurs at positions 8 and 12. Lysine 17 carries the N6-acetyllysine; alternate modification. N6-succinyllysine; alternate is present on lysine 17. A Phosphotyrosine modification is found at tyrosine 25. Phosphoserine is present on serine 36. Lysine 41 is subject to N6-succinyllysine. Serine 50 carries the phosphoserine modification. Histidine 59 provides a ligand contact to O2. A heme b-binding site is contributed by histidine 88. Serine 103 is subject to Phosphoserine. Residue threonine 109 is modified to Phosphothreonine. 2 positions are modified to phosphoserine: serine 125 and serine 132. Phosphothreonine is present on residues threonine 135 and threonine 138. Serine 139 is modified (phosphoserine).

The protein belongs to the globin family. In terms of assembly, heterotetramer of two alpha chains and two beta chains. In terms of tissue distribution, red blood cells.

Involved in oxygen transport from the lung to the various peripheral tissues. Functionally, hemopressin acts as an antagonist peptide of the cannabinoid receptor CNR1. Hemopressin-binding efficiently blocks cannabinoid receptor CNR1 and subsequent signaling. The sequence is that of Hemoglobin subunit alpha (HBA) from Pantholops hodgsonii (Chiru).